Consider the following 165-residue polypeptide: Small ribosomal subunit protein uS3m (165 aa).

Residues 1 to 30 constitute a mitochondrion transit peptide; that stretch reads MNFLKKLLPQVATEVQQLSRSGFHTSSVCC.

This sequence belongs to the universal ribosomal protein uS3 family. In terms of assembly, component of the mitochondrial ribosome small subunit (28S) which comprises a 12S rRNA and about 30 distinct proteins.

It localises to the mitochondrion. This is Small ribosomal subunit protein uS3m (mRpS24) from Drosophila melanogaster (Fruit fly).